The primary structure comprises 78 residues: Large ribosomal subunit protein bL28 (78 aa).

The tract at residues 1-25 is disordered; it reads MSRVCQVTGKRPTVGNNRSHAKNAT.

This sequence belongs to the bacterial ribosomal protein bL28 family.

This chain is Large ribosomal subunit protein bL28, found in Tolumonas auensis (strain DSM 9187 / NBRC 110442 / TA 4).